The primary structure comprises 1839 residues: MNGRIRQNQTAYNPYSTSGRNNRNTINSERDESENGSLLMNGSSSPPNNQQTNKAGFFKNMVSKLLSKPLQWMFSNFDESSSSSSSSSSSYDDGNNIPQKGSSTTTTNINNNNNNNNSNSNSNSNNNTNNQNNNSNNNNNNNNKINISDDYDSNLSKVKVPSGINFDTSSLSVADLTRSYQTNISNKNILDNKPILKKDQNPTTTTTTTTAAAVPKKSVAIGGVTNNDKKPTTTTTATTSILKTNINSLYPNLSQDRINANASTFNSSRNIKNNLSPTQTTLKITNNNTIYSNSQFKKKPISSTFNASPFESSIINSSSILSKRKQFDDNNNSNINDNQSIYNRQSIYSPNSKIEQPPLKKRLPNADGTDNSVMMATSQAAKRILEHLDSFSNPVLAHYNPSSTMAPSSQSLYNGNDSTYQPPTSVYRPKIKIPQISINYKYNPYGLSKLLEKKPKSNKDLGLEIPTNSITSSVSLYKKPLNKKSEDESTEPIKTYATPSTTTTTATVANTSSSSSSSSSSSSSSSSSSSSSSSSSSLFSSKPATISSNTTTTTTTSSPPSSSLFSTTSSAASTNTATASSLFSATPATTIATSSPSTSTSTSSSSSGNEKKLDNMFTSDSNKSNLFSKENDGGGVNPFKNLATTVSKTDFIGINGVSTSTSSSTSTSKSSPIAKKDITSINKSAPYEKKKRGLENEDTPLDVPGLKNIEPPSGLFNFSGIKPIETTLFSVSTTTPLATTTTASSSSSSSLFSSPPTTDKSSADKSSADKSSTDKSTSPVTTSIPSFTSSSTSTSLFGPTTTTTDKDSKTASIFSTKPTTEGLFSKPTTSLTSSSLFSSTITTATTTPSIFGDASKSSTSTSLFGSSNTTTAKPPASFGVNLSAAPKKSSPPPPPESDEEDEENEGDEGDEEGDENGELEAEEAFYVPPDSDEENEGDGNGGDLEAEEEFYVPPDSDEEKEKEKKPKTKQQSTQLTGLFAAPPKGGSLFGNTPTGGSLFGSAPTGSSLFSGGSLLTSSFLTKKGENDDDSSDEDSNKKRKKKRESSSSSSTSSNIIIPTTSKKEKIDDKPSTTTTTTTTSLFGSTTTSGLFSNPSTTSTGSLFSSNPLGSTASTSSLFGASTLASTATTTATPTTSLFGSTTPSSSSSSSSSSSSTTSTTTPSNSLFGTSSSSSSTSSSLFGSTTSATTPSSLFGTTTTSSDSKSETKTTPSLSSGGLFSTTSASPFSIPSSTSSSGLFGSTNQTESKVATTTTTAATTATPSTSLFGSTTTPSTSSSTSSLTTTPSTGLFGASSSTTPSTGLFGSATTPSTGLFGASSSSSSSSISSSSTTSTTTTPSTGLFGSTTPSTGLFGSTTTAATTTPSTGLFGSTPSSTTSTTTTPPNGLFGSTTPSTALFGTSTPATTSTLTTSTSTTPSTGLFGSSSSIATTTPSTGLFGSTSSSTTNTAPSTGLFGSTTTSTTATPFGSSSSTPSTGLFGSSSSSTSSSLSSSSTTATQPTGLFGSTAPSTGLFGSTTATNPSTGLFGSTTTTSTTTTPSTGLFGSSSSTPSSTGLFGSSSSTTSSTTTPSTGLFGSAAPSTSSPFSIPTSSTPATSNPFGSNPFPTSSPTTVSSTPSSNPFGAPSLSNSTSSSSLFGAPTTSTAATTTPSFGSSPFGAPSSTSSTPFGASPFGAPTSTSSPPFGAPTSASSTPFGAPQISTSSSTNLFGGASSSTAAPSFVSSPFGAPITSSSSSSSSSLPFGAPTTSSSSSTPFGASPFGNSMASTTSPFGAPAASPSPFGIQAASPSPFGAPAASPSPFGSTPSTAPNPFGNFGAVPANGFSLGKMGTSKKPAKKK.

Polar residues-rich tracts occupy residues 1–27 (MNGR…NTIN) and 35–54 (NGSL…QTNK). 10 disordered regions span residues 1-54 (MNGR…QTNK), 78-150 (DESS…ISDD), 325-367 (KQFD…PNAD), 480-568 (PLNK…FSTT), 589-636 (TTIA…GGGV), 657-705 (VSTS…DVPG), 739-810 (TTTT…DSKT), 818-837 (PTTE…SSLF), 846-1106 (TTPS…FSSN), and 1129-1839 (TTAT…AKKK). The span at 80–90 (SSSSSSSSSSS) shows a compositional bias: low complexity. Positions 91 to 101 (YDDGNNIPQKG) are enriched in polar residues. Low complexity-rich tracts occupy residues 102 to 148 (SSTT…INIS) and 329 to 343 (DNNN…SIYN). Over residues 344-354 (RQSIYSPNSKI) the composition is skewed to polar residues. Composition is skewed to low complexity over residues 495-568 (TYAT…FSTT) and 589-607 (TTIA…SSSS). Positions 616–628 (MFTSDSNKSNLFS) are enriched in polar residues. Low complexity-rich tracts occupy residues 658-671 (STST…SKSS) and 739-760 (TTTT…TTDK). A compositionally biased stretch (basic and acidic residues) spans 761–773 (SSADKSSADKSST). Low complexity-rich tracts occupy residues 774–803 (DKST…TTTT), 827–837 (PTTSLTSSSLF), and 846–871 (TTPS…NTTT). Acidic residues-rich tracts occupy residues 896–923 (ESDE…EAEE) and 944–958 (LEAE…DSDE). Composition is skewed to low complexity over residues 1005 to 1021 (GSSL…SFLT) and 1046 to 1060 (SSSS…IPTT). Positions 1061–1070 (SKKEKIDDKP) are enriched in basic and acidic residues. Over residues 1071 to 1092 (STTTTTTTTSLFGSTTTSGLFS) the composition is skewed to low complexity. Residues 1093-1106 (NPSTTSTGSLFSSN) show a composition bias toward polar residues. 2 stretches are compositionally biased toward low complexity: residues 1129 to 1242 (TTAT…FGST) and 1250 to 1292 (ATTT…GLFG). Residues 1293–1310 (ASSSTTPSTGLFGSATTP) show a composition bias toward polar residues. 2 stretches are compositionally biased toward low complexity: residues 1311-1384 (STGL…TTPP) and 1397-1498 (LFGT…TTAT). Residues 1507–1521 (TAPSTGLFGSTTATN) are compositionally biased toward polar residues. Residues 1522-1673 (PSTGLFGSTT…SSTPFGASPF (152 aa)) are compositionally biased toward low complexity. The segment covering 1676-1708 (PTSTSSPPFGAPTSASSTPFGAPQISTSSSTNL) has biased composition (polar residues). Over residues 1712 to 1810 (ASSSTAAPSF…PFGSTPSTAP (99 aa)) the composition is skewed to low complexity.

The protein is Nuclear pore complex protein DDB_G0274915 of Dictyostelium discoideum (Social amoeba).